Consider the following 685-residue polypeptide: Serotransferrin (685 aa).

Positions 1–16 (MKPLLLLPLLGCLATI) are cleaved as a signal peptide. Transferrin-like domains lie at 23–329 (VKWC…ALKI) and 340–666 (MKWC…SLRT). The cysteines at positions 26 and 48 are disulfide-linked. The Fe(3+) site is built by aspartate 72 and tyrosine 102. 3 disulfide bridges follow: cysteine 125–cysteine 206, cysteine 170–cysteine 184, and cysteine 234–cysteine 248. Threonine 127, lysine 131, alanine 133, and glycine 134 together coordinate hydrogencarbonate. A Fe(3+)-binding site is contributed by tyrosine 200. Position 256 (histidine 256) interacts with Fe(3+). Cystine bridges form between cysteine 343-cysteine 379 and cysteine 353-cysteine 370. Residues aspartate 394 and tyrosine 428 each contribute to the Fe(3+) site. Cystine bridges form between cysteine 404-cysteine 678, cysteine 419-cysteine 639, cysteine 451-cysteine 526, cysteine 475-cysteine 667, cysteine 485-cysteine 499, cysteine 496-cysteine 509, and cysteine 566-cysteine 580. Residues threonine 453, arginine 457, alanine 459, and glycine 460 each contribute to the hydrogencarbonate site. Asparagine 476 is a glycosylation site (N-linked (GlcNAc...) asparagine). Position 520 (tyrosine 520) interacts with Fe(3+). Fe(3+) is bound at residue histidine 588.

This sequence belongs to the transferrin family. In terms of assembly, monomer.

It localises to the secreted. Transferrins are iron binding transport proteins which can bind two Fe(3+) ions in association with the binding of an anion, usually bicarbonate. This Paralichthys olivaceus (Bastard halibut) protein is Serotransferrin (tf).